A 199-amino-acid chain; its full sequence is Recombination protein RecR (199 aa).

The C4-type zinc finger occupies 58–73 (CRRCFNLTEGEECDIC). The Toprim domain occupies 81-176 (SVICVVEDPY…RVTALASGLP (96 aa)).

It belongs to the RecR family.

Its function is as follows. May play a role in DNA repair. It seems to be involved in an RecBC-independent recombinational process of DNA repair. It may act with RecF and RecO. The polypeptide is Recombination protein RecR (Rubrobacter xylanophilus (strain DSM 9941 / JCM 11954 / NBRC 16129 / PRD-1)).